Consider the following 229-residue polypeptide: 7-cyano-7-deazaguanine synthase (229 aa).

An ATP-binding site is contributed by 8–18 (FSGGQDSTTCL). Zn(2+)-binding residues include cysteine 186, cysteine 195, cysteine 198, and cysteine 201.

Belongs to the QueC family. Zn(2+) serves as cofactor.

The catalysed reaction is 7-carboxy-7-deazaguanine + NH4(+) + ATP = 7-cyano-7-deazaguanine + ADP + phosphate + H2O + H(+). It participates in purine metabolism; 7-cyano-7-deazaguanine biosynthesis. In terms of biological role, catalyzes the ATP-dependent conversion of 7-carboxy-7-deazaguanine (CDG) to 7-cyano-7-deazaguanine (preQ(0)). This chain is 7-cyano-7-deazaguanine synthase, found in Edwardsiella ictaluri (strain 93-146).